The primary structure comprises 129 residues: NADPH-dependent 7-cyano-7-deazaguanine reductase (129 aa).

Cys-43 (thioimide intermediate) is an active-site residue. Residue Asp-50 is the Proton donor of the active site. Residues 65 to 67 (VEL) and 84 to 85 (HE) contribute to the substrate site.

Belongs to the GTP cyclohydrolase I family. QueF type 1 subfamily.

Its subcellular location is the cytoplasm. It catalyses the reaction 7-aminomethyl-7-carbaguanine + 2 NADP(+) = 7-cyano-7-deazaguanine + 2 NADPH + 3 H(+). It functions in the pathway tRNA modification; tRNA-queuosine biosynthesis. In terms of biological role, catalyzes the NADPH-dependent reduction of 7-cyano-7-deazaguanine (preQ0) to 7-aminomethyl-7-deazaguanine (preQ1). The sequence is that of NADPH-dependent 7-cyano-7-deazaguanine reductase from Aquifex aeolicus (strain VF5).